The primary structure comprises 231 residues: Endonuclease NucS (231 aa).

The protein belongs to the NucS endonuclease family.

It is found in the cytoplasm. Cleaves both 3' and 5' ssDNA extremities of branched DNA structures. The sequence is that of Endonuclease NucS from Micrococcus luteus (strain ATCC 4698 / DSM 20030 / JCM 1464 / CCM 169 / CCUG 5858 / IAM 1056 / NBRC 3333 / NCIMB 9278 / NCTC 2665 / VKM Ac-2230) (Micrococcus lysodeikticus).